Here is a 211-residue protein sequence, read N- to C-terminus: Acyl-homoserine-lactone synthase (211 aa).

It belongs to the autoinducer synthase family.

It carries out the reaction a fatty acyl-[ACP] + S-adenosyl-L-methionine = an N-acyl-L-homoserine lactone + S-methyl-5'-thioadenosine + holo-[ACP] + H(+). Required for the synthesis of OHHL (N-(3-oxohexanoyl)-L-homoserine lactone), an autoinducer molecule which binds to TraR and thus acts in the control of conjugal transfer. In Agrobacterium fabrum (strain C58 / ATCC 33970) (Agrobacterium tumefaciens (strain C58)), this protein is Acyl-homoserine-lactone synthase (traI).